The sequence spans 1491 residues: Terminal uridylyltransferase 7 (1491 aa).

Residue Thr-64 is modified to Phosphothreonine. Ser-132 and Ser-172 each carry phosphoserine. The tract at residues 165–203 (MSEMEAGSPENKKQRSRPRKPRRTRTEDSEQDGDLDGPV) is disordered. Basic residues predominate over residues 178-187 (QRSRPRKPRR). The Matrin-type zinc finger occupies 244 to 274 (YTCKLCDALIDSIPFAHKHIKEKRHKKNLKE). The PAP-associated 1 domain maps to 551–600 (VGQLWVELLRFYALEFNLADLVISIRVKELISRESKDWPKKRIAIEDPYS). Phosphoserine is present on residues Ser-600 and Ser-747. Disordered regions lie at residues 740-774 (AELP…KHPE) and 834-911 (QSRT…CGEN). Positions 844–857 (DDEEEEEEEEEEEE) are enriched in acidic residues. Thr-865 is subject to Phosphothreonine. The span at 885-897 (GEEDALSEEDDLA) shows a compositional bias: acidic residues. Ser-891 is modified (phosphoserine). The segment at 947 to 1491 (RKLTFTKGKS…ASVKRTQQES (545 aa)) is sufficient for monouridylation activity. The CCHC-type 1 zinc finger occupies 959–976 (VVCSLCKREGHLKKDCPE). UTP contacts are provided by residues 1043 to 1046 (SSKN), 1053 to 1056 (SDLD), Asn-1126, Lys-1148, 1166 to 1170 (SYAYT), and His-1282. Residues Asp-1054 and Asp-1056 each coordinate Mg(2+). In terms of domain architecture, PAP-associated 2 spans 1230–1282 (VGQLWLGLLRFYTEEFDFKEHVISIRRKSLLTTFKKQWTSKYIVIEDPFDLNH). Residues 1341–1358 (RCCRICGKIGHFMKDCPM) form a CCHC-type 2 zinc finger. Disordered regions lie at residues 1362–1399 (VRRR…EKEV) and 1463–1491 (PQFK…QQES). Positions 1377–1399 (SESKEKRSKEDKEIQNKYTEKEV) are enriched in basic and acidic residues. The CCHC-type 3 zinc-finger motif lies at 1447–1464 (KRCFICGREGHIKKECPQ). The span at 1470–1481 (GSLSSKYMTQGR) shows a compositional bias: polar residues.

It belongs to the DNA polymerase type-B-like family. Mg(2+) is required as a cofactor. It depends on Mn(2+) as a cofactor.

It localises to the cytoplasm. The enzyme catalyses RNA(n) + UTP = RNA(n)-3'-uridine ribonucleotide + diphosphate. Functionally, uridylyltransferase that mediates the terminal uridylation of mRNAs with short (less than 25 nucleotides) poly(A) tails, hence facilitating global mRNA decay. Essential for both oocyte maturation and fertility. Through 3' terminal uridylation of mRNA, sculpts, with TUT7, the maternal transcriptome by eliminating transcripts during oocyte growth. Involved in microRNA (miRNA)-induced gene silencing through uridylation of deadenylated miRNA targets. Also acts as a suppressor of miRNA biogenesis by mediating the terminal uridylation of miRNA precursors, including that of let-7 (pre-let-7). Uridylated pre-let-7 RNA is not processed by Dicer and undergo degradation. Pre-let-7 uridylation is strongly enhanced in the presence of LIN28A. Due to functional redundancy between ZCCHC6 and ZCCHC11, the identification of the specific role of each of these proteins is difficult. Involved in microRNA (miRNA)-induced gene silencing through uridylation of deadenylated miRNA targets. Also functions as an integral regulator of microRNA biogenesiS using 3 different uridylation mechanisms. Acts as a suppressor of miRNA biogenesis by mediating the terminal uridylation of some miRNA precursors, including that of let-7 (pre-let-7). Uridylated pre-let-7 RNA is not processed by Dicer and undergo degradation. Pre-let-7 oligouridylation is strongly enhanced in the presence of LIN28A. In the absence of LIN28A, TUT7 and TUT4 monouridylate group II pre-miRNAs, which includes most of pre-let7 members, that shapes an optimal 3' end overhang for efficient processing. Add oligo-U tails to truncated pre-miRNAS with a 5' overhang which may promote rapid degradation of non-functional pre-miRNA species. Does not play a role in replication-dependent histone mRNA degradation. Due to functional redundancy between TUT4 and TUT7, the identification of the specific role of each of these proteins is difficult. TUT4 and TUT7 restrict retrotransposition of long interspersed element-1 (LINE-1) in cooperation with MOV10 counteracting the RNA chaperonne activity of L1RE1. TUT7 uridylates LINE-1 mRNAs in the cytoplasm which inhibits initiation of reverse transcription once in the nucleus, whereas uridylation by TUT4 destabilizes mRNAs in cytoplasmic ribonucleoprotein granules. This chain is Terminal uridylyltransferase 7, found in Mus musculus (Mouse).